Reading from the N-terminus, the 212-residue chain is Large ribosomal subunit protein uL3 (212 aa).

The disordered stretch occupies residues 131–155; the sequence is RGNMTHGSKNHRLPGSTGAGTTPGR.

The protein belongs to the universal ribosomal protein uL3 family. Part of the 50S ribosomal subunit. Forms a cluster with proteins L14 and L19.

Its function is as follows. One of the primary rRNA binding proteins, it binds directly near the 3'-end of the 23S rRNA, where it nucleates assembly of the 50S subunit. This is Large ribosomal subunit protein uL3 from Microcystis aeruginosa (strain NIES-843 / IAM M-2473).